We begin with the raw amino-acid sequence, 449 residues long: Chromosomal replication initiator protein DnaA (449 aa).

Residues 1 to 75 are domain I, interacts with DnaA modulators; that stretch reads MDTNNDIEKR…EILSQNKVGM (75 aa). The domain II stretch occupies residues 75 to 106; the sequence is MHLAHSVDVRIEVASKVHVSDHSNINYKATKS. The interval 107–321 is domain III, AAA+ region; it reads SIKDSYTFEN…GAIIKISVNA (215 aa). Residues Gly151, Gly153, Lys154, and Thr155 each contribute to the ATP site. The segment at 322-449 is domain IV, binds dsDNA; the sequence is NLMNAPIDLN…LNELNDKKQH (128 aa).

It belongs to the DnaA family. In terms of assembly, oligomerizes as a right-handed, spiral filament on DNA at oriC.

It localises to the cytoplasm. In terms of biological role, plays an essential role in the initiation and regulation of chromosomal replication. ATP-DnaA binds to the origin of replication (oriC) to initiate formation of the DNA replication initiation complex once per cell cycle. Binds the DnaA box (a 9 base pair repeat at the origin) and separates the double-stranded (ds)DNA. Forms a right-handed helical filament on oriC DNA; dsDNA binds to the exterior of the filament while single-stranded (ss)DNA is stabiized in the filament's interior. The ATP-DnaA-oriC complex binds and stabilizes one strand of the AT-rich DNA unwinding element (DUE), permitting loading of DNA polymerase. After initiation quickly degrades to an ADP-DnaA complex that is not apt for DNA replication. Binds acidic phospholipids. The sequence is that of Chromosomal replication initiator protein DnaA from Helicobacter acinonychis (strain Sheeba).